The chain runs to 640 residues: Threonine--tRNA ligase (640 aa).

The region spanning methionine 1–threonine 61 is the TGS domain. The tract at residues aspartate 242–proline 533 is catalytic. Zn(2+) contacts are provided by cysteine 333, histidine 384, and histidine 510.

Belongs to the class-II aminoacyl-tRNA synthetase family. Homodimer. It depends on Zn(2+) as a cofactor.

It is found in the cytoplasm. The enzyme catalyses tRNA(Thr) + L-threonine + ATP = L-threonyl-tRNA(Thr) + AMP + diphosphate + H(+). In terms of biological role, catalyzes the attachment of threonine to tRNA(Thr) in a two-step reaction: L-threonine is first activated by ATP to form Thr-AMP and then transferred to the acceptor end of tRNA(Thr). Also edits incorrectly charged L-seryl-tRNA(Thr). The sequence is that of Threonine--tRNA ligase from Prochlorococcus marinus (strain MIT 9313).